The following is a 430-amino-acid chain: Bifunctional protein GlmU (430 aa).

Residues 1-227 (MISKTHTFVI…GEEATGINNR (227 aa)) form a pyrophosphorylase region. UDP-N-acetyl-alpha-D-glucosamine is bound by residues Lys25, Gln74, 79 to 80 (GT), 104 to 106 (YGD), Gly140, Glu154, Asn168, and Asn225. Residue Asp106 participates in Mg(2+) binding. Asn225 serves as a coordination point for Mg(2+). The tract at residues 228-248 (NDLIKAEFYFQENKRKIFTDS) is linker. Positions 249-430 (GVTLVAPETV…REKQVTKRIK (182 aa)) are N-acetyltransferase. UDP-N-acetyl-alpha-D-glucosamine contacts are provided by Arg314 and Lys332. His344 serves as the catalytic Proton acceptor. UDP-N-acetyl-alpha-D-glucosamine contacts are provided by Tyr347 and Asn358. Acetyl-CoA-binding positions include Ala361, 367 to 368 (NY), Ala404, and Arg421.

The protein in the N-terminal section; belongs to the N-acetylglucosamine-1-phosphate uridyltransferase family. In the C-terminal section; belongs to the transferase hexapeptide repeat family. Homotrimer. Mg(2+) serves as cofactor.

The protein localises to the cytoplasm. It carries out the reaction alpha-D-glucosamine 1-phosphate + acetyl-CoA = N-acetyl-alpha-D-glucosamine 1-phosphate + CoA + H(+). It catalyses the reaction N-acetyl-alpha-D-glucosamine 1-phosphate + UTP + H(+) = UDP-N-acetyl-alpha-D-glucosamine + diphosphate. Its pathway is nucleotide-sugar biosynthesis; UDP-N-acetyl-alpha-D-glucosamine biosynthesis; N-acetyl-alpha-D-glucosamine 1-phosphate from alpha-D-glucosamine 6-phosphate (route II): step 2/2. The protein operates within nucleotide-sugar biosynthesis; UDP-N-acetyl-alpha-D-glucosamine biosynthesis; UDP-N-acetyl-alpha-D-glucosamine from N-acetyl-alpha-D-glucosamine 1-phosphate: step 1/1. It functions in the pathway bacterial outer membrane biogenesis; LPS lipid A biosynthesis. Functionally, catalyzes the last two sequential reactions in the de novo biosynthetic pathway for UDP-N-acetylglucosamine (UDP-GlcNAc). The C-terminal domain catalyzes the transfer of acetyl group from acetyl coenzyme A to glucosamine-1-phosphate (GlcN-1-P) to produce N-acetylglucosamine-1-phosphate (GlcNAc-1-P), which is converted into UDP-GlcNAc by the transfer of uridine 5-monophosphate (from uridine 5-triphosphate), a reaction catalyzed by the N-terminal domain. The sequence is that of Bifunctional protein GlmU from Wolbachia pipientis wMel.